Consider the following 86-residue polypeptide: Large ribosomal subunit protein uL30m (86 aa).

The tract at residues 67–86 (QQRELRKSNPGFIVEKRTID) is disordered.

This sequence belongs to the universal ribosomal protein uL30 family. Component of the mitochondrial large ribosomal subunit (mt-LSU). Mature yeast 74S mitochondrial ribosomes consist of a small (37S) and a large (54S) subunit. The 37S small subunit contains a 15S ribosomal RNA (15S mt-rRNA) and 34 different proteins. The 54S large subunit contains a 21S rRNA (21S mt-rRNA) and 46 different proteins.

The protein resides in the mitochondrion. Its function is as follows. Component of the mitochondrial ribosome (mitoribosome), a dedicated translation machinery responsible for the synthesis of mitochondrial genome-encoded proteins, including at least some of the essential transmembrane subunits of the mitochondrial respiratory chain. The mitoribosomes are attached to the mitochondrial inner membrane and translation products are cotranslationally integrated into the membrane. The protein is Large ribosomal subunit protein uL30m (MRPL33) of Saccharomyces cerevisiae (strain ATCC 204508 / S288c) (Baker's yeast).